The sequence spans 500 residues: NAD(P)H-quinone oxidoreductase chain 4, chloroplastic (500 aa).

The next 15 membrane-spanning stretches (helical) occupy residues 4–24 (FPWL…MLFL), 35–55 (YTIC…CYNF), 87–107 (IGTI…AFPV), 113–130 (LFHF…GSFS), 134–154 (LLLF…LLAM), 167–187 (FILY…GISL), 211–231 (ILFY…IPLH), 242–262 (HYST…YGLV), 272–292 (AHSM…IYAA), 305–325 (IAYS…SITD), 330–350 (GAIL…FLAG), 364–384 (MGGM…LSMA), 386–406 (LALP…GIIT), 411–431 (FLIF…LTPI), and 462–482 (LFLS…PDFV).

It belongs to the complex I subunit 4 family.

It is found in the plastid. The protein resides in the chloroplast thylakoid membrane. The catalysed reaction is a plastoquinone + NADH + (n+1) H(+)(in) = a plastoquinol + NAD(+) + n H(+)(out). It carries out the reaction a plastoquinone + NADPH + (n+1) H(+)(in) = a plastoquinol + NADP(+) + n H(+)(out). This chain is NAD(P)H-quinone oxidoreductase chain 4, chloroplastic, found in Capsella bursa-pastoris (Shepherd's purse).